The chain runs to 1190 residues: Phosphatidylinositol 3,4,5-trisphosphate 5-phosphatase 1 (1190 aa).

An SH2 domain is found at 8–104 (WNHGNITRSK…GLVTHLQFPV (97 aa)). Positions 111–120 (AIDEPEEDTE) are enriched in acidic residues. The disordered stretch occupies residues 111–130 (AIDEPEEDTESVMSPPELPP). Positions 126–131 (PELPPR) match the SH3-binding 1 motif. S245 is subject to Phosphoserine. The NPXY motif 1 signature appears at 914–917 (NPNY). Residue Y917 is modified to Phosphotyrosine. At S934 the chain carries Phosphoserine. Y944 is subject to Phosphotyrosine. A disordered region spans residues 946–1190 (QLPKDSSLGP…ESLLGRTAMQ (245 aa)). Residues 961 to 971 (PPTPPSQPPLS) are compositionally biased toward pro residues. At T963 the chain carries Phosphothreonine. 2 positions are modified to phosphoserine: S966 and S971. The SH3-binding 2 signature appears at 969-974 (PLSPKK). A compositionally biased stretch (basic and acidic residues) spans 989 to 998 (QETRPGDLGK). Residues 1014 to 1028 (MFENPLYGSVSPFPK) are interaction with DAB2. The short motif at 1017-1020 (NPLY) is the NPXY motif 2 element. The residue at position 1020 (Y1020) is a Phosphotyrosine. Positions 1031 to 1045 (PRKEQESPKMMRKEP) are enriched in basic and acidic residues. Residues 1038–1049 (PKMMRKEPPPCP) carry the SH3-binding 3 motif. The span at 1140–1149 (IPAPRPPLPV) shows a compositional bias: pro residues. Residues 1161–1183 (KGRDYRDNTELPHHGKHRQEESL) are compositionally biased toward basic and acidic residues.

The protein belongs to the inositol 1,4,5-trisphosphate 5-phosphatase family. Interacts with tyrosine phosphorylated forms of SHC1. Interacts with tyrosine phosphorylated form of DOK1. Interacts with tyrosine phosphorylated form of DOK3. Interacts with tyrosine phosphorylated form of SLAMF1/CD150. Interacts with PTPN11/SHP-2 in response to IL-3. Interacts with receptor EPOR. Interacts with receptors MS4A2/FCER1B and FCER1G. Interacts with receptors FCGR2B and FCGR3. Interacts with receptor FCGR2A, leading to regulate gene expression during the phagocytic process. Interacts with GRB2. Interacts with PLCG1. Interacts with tyrosine kinases SRC and TEC. Interacts with c-Met/MET. Interacts with MILR1 (tyrosine-phosphorylated). Can weakly interact (via NPXY motif 2) with DAB2 (via PID domain); the interaction is impaired by tyrosine phosphorylation of the NPXY motif. Interacts (via SH2 domain) with tyrosine phosphorylated KLRC1 (via ITIM). Interacts with MPL/TPOR. Post-translationally, tyrosine phosphorylated by the members of the SRC family after exposure to a diverse array of extracellular stimuli such as cytokines, growth factors, antibodies, chemokines, integrin ligands and hypertonic and oxidative stress. Phosphorylated upon IgG receptor FCGR2B-binding.

The protein resides in the cytoplasm. The protein localises to the cell membrane. It is found in the membrane raft. Its subcellular location is the cytoskeleton. The catalysed reaction is a 1,2-diacyl-sn-glycero-3-phospho-(1D-myo-inositol-3,4,5-trisphosphate) + H2O = a 1,2-diacyl-sn-glycero-3-phospho-(1D-myo-inositol-3,4-bisphosphate) + phosphate. It catalyses the reaction 1D-myo-inositol 1,3,4,5-tetrakisphosphate + H2O = 1D-myo-inositol 1,3,4-trisphosphate + phosphate. It carries out the reaction a 1,2-diacyl-sn-glycero-3-phospho-(1D-myo-inositol-4,5-bisphosphate) + H2O = a 1,2-diacyl-sn-glycero-3-phospho-(1D-myo-inositol 4-phosphate) + phosphate. With respect to regulation, activated upon translocation to the sites of synthesis of PtdIns(3,4,5)P3 in the membrane. Phosphatidylinositol (PtdIns) phosphatase that specifically hydrolyzes the 5-phosphate of phosphatidylinositol-3,4,5-trisphosphate (PtdIns(3,4,5)P3) to produce PtdIns(3,4)P2, thereby negatively regulating the PI3K (phosphoinositide 3-kinase) pathways. Also able to hydrolyze the 5-phosphate of phosphatidylinositol-4,5-bisphosphate (PtdIns(4,5)P3) and inositol 1,3,4,5-tetrakisphosphate. Acts as a negative regulator of B-cell antigen receptor signaling. Mediates signaling from the FC-gamma-RIIB receptor (FCGR2B), playing a central role in terminating signal transduction from activating immune/hematopoietic cell receptor systems. Acts as a negative regulator of myeloid cell proliferation/survival and chemotaxis, mast cell degranulation, immune cells homeostasis, integrin alpha-IIb/beta-3 signaling in platelets and JNK signaling in B-cells. Regulates proliferation of osteoclast precursors, macrophage programming, phagocytosis and activation and is required for endotoxin tolerance. Involved in the control of cell-cell junctions, CD32a signaling in neutrophils and modulation of EGF-induced phospholipase C activity. Key regulator of neutrophil migration, by governing the formation of the leading edge and polarization required for chemotaxis. Modulates FCGR3/CD16-mediated cytotoxicity in NK cells. Mediates the activin/TGF-beta-induced apoptosis through its Smad-dependent expression. In Rattus norvegicus (Rat), this protein is Phosphatidylinositol 3,4,5-trisphosphate 5-phosphatase 1 (Inpp5d).